Consider the following 365-residue polypeptide: Putative chalcone synthase (365 aa).

Cys-144 is a catalytic residue.

This sequence belongs to the thiolase-like superfamily. Chalcone/stilbene synthases family.

It carries out the reaction (E)-4-coumaroyl-CoA + 3 malonyl-CoA + 3 H(+) = 2',4,4',6'-tetrahydroxychalcone + 3 CO2 + 4 CoA. The polypeptide is Putative chalcone synthase (bcsA) (Bacillus subtilis (strain 168)).